Reading from the N-terminus, the 178-residue chain is Caveolin-1 (178 aa).

Serine 2 bears the N-acetylserine mark. Phosphoserine is present on serine 2. A required for homooligomerization region spans residues 2-94 (SGGKYVDSEG…WKASFTTFTV (93 aa)). Residues 2–104 (SGGKYVDSEG…TKYWFYRLLS (103 aa)) lie on the Cytoplasmic side of the membrane. Lysine 5 carries the N6-acetyllysine; alternate modification. Lysine 5 participates in a covalent cross-link: Glycyl lysine isopeptide (Lys-Gly) (interchain with G-Cter in ubiquitin); alternate. Residue tyrosine 6 is modified to Phosphotyrosine. Serine 9 carries the phosphoserine modification. Tyrosine 14 is modified (phosphotyrosine; by ABL1). Residue tyrosine 25 is modified to Phosphotyrosine. Glycyl lysine isopeptide (Lys-Gly) (interchain with G-Cter in ubiquitin) cross-links involve residues lysine 26 and lysine 30. At serine 37 the chain carries Phosphoserine. Glycyl lysine isopeptide (Lys-Gly) (interchain with G-Cter in ubiquitin) cross-links involve residues lysine 39, lysine 47, and lysine 57. Residues 82-94 (DGIWKASFTTFTV) are interaction with CAVIN3. Residues 105 to 125 (ALFGIPMALIWGIYFAILSFL) constitute an intramembrane region (helical). Over 126 to 178 (HIWAVVPCIKSFLIEIQCISRVYSIYVHTVCDPLFEAVGKIFSNVRINLQKEI) the chain is Cytoplasmic. Residues 131–142 (VPCIKSFLIEIQ) are interacts with SPRY1, SPRY2, SPRY3 and SPRY4. Residues cysteine 133, cysteine 143, and cysteine 156 are each lipidated (S-palmitoyl cysteine). The segment at 149–160 (SIYVHTVCDPLF) is interacts with SPRY1, SPRY2, and SPRY4. The interval 167–178 (FSNVRINLQKEI) is interacts with SPRY1, SPRY2, SPRY3 and SPRY4.

This sequence belongs to the caveolin family. As to quaternary structure, homooligomer. Interacts (via the N-terminus) with DPP4; the interaction is direct. Forms a stable heterooligomeric complex with CAV2 that targets to lipid rafts and drives caveolae formation. Interacts with PACSIN2; this interaction induces membrane tubulation. Interacts with BMX, BTK, CTNNB1, CDH1, GLIPR2, JUP, NOSTRIN, SNAP25 and STX1A. Interacts with SLC7A9. Interacts with TGFBR1. Interacts with CAVIN3 (via leucine-zipper domain) in a cholesterol-sensitive manner. Interacts with CAVIN1. Interacts with EHD2 in a cholesterol-dependent manner. Forms a ternary complex with UBXN6 and VCP; mediates CAV1 targeting to lysosomes for degradation. Interacts with ABCG1; this interaction regulates ABCG1-mediated cholesterol efflux. Interacts with NEU3; this interaction enhances NEU3 sialidase activity within caveola. Interacts (via C-terminus) with SPRY1, SPRY2 (via C-terminus), SPRY3, and SPRY4. Interacts with IGFBP5; this interaction allows trafficking of IGFBP5 from the plasma membrane to the nucleus. Post-translationally, phosphorylated at Tyr-14 by ABL1 in response to oxidative stress. Ubiquitinated. Undergo monoubiquitination and multi- and/or polyubiquitination. Monoubiquitination of N-terminal lysines promotes integration in a ternary complex with UBXN6 and VCP which promotes oligomeric CAV1 targeting to lysosomes for degradation. Ubiquitinated by ZNRF1; leading to degradation and modulation of the TLR4-mediated immune response.

The protein resides in the golgi apparatus membrane. It localises to the cell membrane. Its subcellular location is the membrane. The protein localises to the caveola. It is found in the membrane raft. Functionally, may act as a scaffolding protein within caveolar membranes. Forms a stable heterooligomeric complex with CAV2 that targets to lipid rafts and drives caveolae formation. Mediates the recruitment of CAVIN proteins (CAVIN1/2/3/4) to the caveolae. Interacts directly with G-protein alpha subunits and can functionally regulate their activity. Involved in the costimulatory signal essential for T-cell receptor (TCR)-mediated T-cell activation. Its binding to DPP4 induces T-cell proliferation and NF-kappa-B activation in a T-cell receptor/CD3-dependent manner. Recruits CTNNB1 to caveolar membranes and may regulate CTNNB1-mediated signaling through the Wnt pathway. Negatively regulates TGFB1-mediated activation of SMAD2/3 by mediating the internalization of TGFBR1 from membrane rafts leading to its subsequent degradation. Binds 20(S)-hydroxycholesterol (20(S)-OHC). In Chlorocebus aethiops (Green monkey), this protein is Caveolin-1 (CAV1).